The chain runs to 358 residues: NADH-quinone oxidoreductase subunit H (358 aa).

8 consecutive transmembrane segments (helical) span residues 20 to 40, 95 to 115, 128 to 148, 168 to 188, 206 to 226, 253 to 273, 290 to 310, and 334 to 354; these read ITVG…IPLI, ALFY…WAVI, IGLL…IIAG, ISYE…SGSM, VFSW…ISAV, GFAF…ISAL, WGFI…AVLY, and VLIP…ISPL.

Belongs to the complex I subunit 1 family. In terms of assembly, NDH-1 is composed of 14 different subunits. Subunits NuoA, H, J, K, L, M, N constitute the membrane sector of the complex.

It is found in the cell inner membrane. It carries out the reaction a quinone + NADH + 5 H(+)(in) = a quinol + NAD(+) + 4 H(+)(out). In terms of biological role, NDH-1 shuttles electrons from NADH, via FMN and iron-sulfur (Fe-S) centers, to quinones in the respiratory chain. The immediate electron acceptor for the enzyme in this species is believed to be ubiquinone. Couples the redox reaction to proton translocation (for every two electrons transferred, four hydrogen ions are translocated across the cytoplasmic membrane), and thus conserves the redox energy in a proton gradient. This subunit may bind ubiquinone. The protein is NADH-quinone oxidoreductase subunit H of Neisseria meningitidis serogroup C (strain 053442).